A 132-amino-acid polypeptide reads, in one-letter code: Ribonuclease P protein component (132 aa).

It belongs to the RnpA family. Consists of a catalytic RNA component (M1 or rnpB) and a protein subunit.

The catalysed reaction is Endonucleolytic cleavage of RNA, removing 5'-extranucleotides from tRNA precursor.. Its function is as follows. RNaseP catalyzes the removal of the 5'-leader sequence from pre-tRNA to produce the mature 5'-terminus. It can also cleave other RNA substrates such as 4.5S RNA. The protein component plays an auxiliary but essential role in vivo by binding to the 5'-leader sequence and broadening the substrate specificity of the ribozyme. The chain is Ribonuclease P protein component from Micrococcus luteus (strain ATCC 4698 / DSM 20030 / JCM 1464 / CCM 169 / CCUG 5858 / IAM 1056 / NBRC 3333 / NCIMB 9278 / NCTC 2665 / VKM Ac-2230) (Micrococcus lysodeikticus).